The chain runs to 175 residues: tRNA (cytidine(56)-2'-O)-methyltransferase (175 aa).

An S-adenosyl-L-methionine-binding site is contributed by Leu82.

The protein belongs to the aTrm56 family. In terms of assembly, homodimer.

The protein localises to the cytoplasm. The enzyme catalyses cytidine(56) in tRNA + S-adenosyl-L-methionine = 2'-O-methylcytidine(56) in tRNA + S-adenosyl-L-homocysteine + H(+). Specifically catalyzes the AdoMet-dependent 2'-O-ribose methylation of cytidine at position 56 in tRNAs. This Cenarchaeum symbiosum (strain A) protein is tRNA (cytidine(56)-2'-O)-methyltransferase.